The sequence spans 481 residues: Xylulose kinase (481 aa).

81–82 provides a ligand contact to substrate; it reads QH. Residue Asp-239 is the Proton acceptor of the active site.

It belongs to the FGGY kinase family.

The catalysed reaction is D-xylulose + ATP = D-xylulose 5-phosphate + ADP + H(+). Catalyzes the phosphorylation of D-xylulose to D-xylulose 5-phosphate. The protein is Xylulose kinase of Streptomyces coelicolor (strain ATCC BAA-471 / A3(2) / M145).